Reading from the N-terminus, the 139-residue chain is Putative nickel-responsive regulator (139 aa).

Positions 79, 90, 92, and 98 each coordinate Ni(2+).

This sequence belongs to the transcriptional regulatory CopG/NikR family. Ni(2+) serves as cofactor.

In terms of biological role, transcriptional regulator. The sequence is that of Putative nickel-responsive regulator from Nitratidesulfovibrio vulgaris (strain ATCC 29579 / DSM 644 / CCUG 34227 / NCIMB 8303 / VKM B-1760 / Hildenborough) (Desulfovibrio vulgaris).